Consider the following 1461-residue polypeptide: Formin-3 (1461 aa).

Disordered stretches follow at residues 1-67 and 431-457; these read MASK…SDDN and YREE…RPTT. The segment covering 12–28 has biased composition (low complexity); it reads TSRSIQSRNSSYSTSSN. Composition is skewed to polar residues over residues 29 to 53 and 438 to 457; these read ERIG…STND and PHGN…RPTT. The GBD/FH3 domain maps to 92-508; it reads SETEQLRKIY…KIQKSMQLLT (417 aa). The interaction with tea4 stretch occupies residues 137-515; it reads QHTVLDEATY…LLTHTLEALE (379 aa). Residues 540–639 are a coiled coil; it reads GTAEEIAEYK…VQNSNEQHLQ (100 aa). The disordered stretch occupies residues 683 to 811; that stretch reads GIPVRVHTPS…EPKIDETSLT (129 aa). The span at 700–718 shows a compositional bias: low complexity; the sequence is SFSGSEISSSPSPLLPDVS. The span at 731-784 shows a compositional bias: pro residues; the sequence is SPPPPPPAVIVPTPAPAPIPVPPPAPIMGGPPPPPPPPGVAGAGPPPPPPPPPA. A compositionally biased stretch (basic and acidic residues) spans 801-811; that stretch reads PEPKIDETSLT. The FH2 domain occupies 845–1257; the sequence is LRDLHKPTRP…RIMSEDRDKL (413 aa). 2 disordered regions span residues 1268-1337 and 1416-1461; these read AKYR…AEEK and ERLQ…RQKQ. 2 stretches are compositionally biased toward basic and acidic residues: residues 1273–1315 and 1325–1337; these read KREL…KTGD and MEDL…AEEK. The segment covering 1445 to 1454 has biased composition (polar residues); that stretch reads TNGSNASNLV.

The protein belongs to the formin homology family. As to quaternary structure, interacts with rax2, rho3 and tea4. Interacts with tea1 in the presence of tea4.

It localises to the cytoplasm. The protein localises to the cell cortex. The protein resides in the cell tip. Involved in controlling polarized cell growth. Required for interphase actin cable formation and microtubule organization. This is Formin-3 (for3) from Schizosaccharomyces pombe (strain 972 / ATCC 24843) (Fission yeast).